The following is a 467-amino-acid chain: Variant surface glycoprotein 7 (467 aa).

Residues 77–87 show a composition bias toward polar residues; that stretch reads TIAAGATNTKL. The interval 77–133 is disordered; the sequence is TIAAGATNTKLSGHHPNQGRRGRRRSSSARPNNSKGNSPSKRAGGAVRGETPASGRL. The segment covering 93–103 has biased composition (basic residues); sequence NQGRRGRRRSS. Residues 107 to 116 show a composition bias toward polar residues; it reads PNNSKGNSPS. Residues N108 and N252 are each glycosylated (N-linked (GlcNAc...) asparagine). Residues 382 to 407 form a disordered region; the sequence is AEKVENPRSQGNPETAENKKEGGNTA. The N-linked (GlcNAc...) asparagine glycan is linked to N416. D444 carries GPI-anchor amidated aspartate lipidation. Residues 445–467 constitute a propeptide, removed in mature form; the sequence is SSFLLSKQFALSVVSAAFAALLF.

The protein localises to the cell membrane. VSG forms a coat on the surface of the parasite. The trypanosome evades the immune response of the host by expressing a series of antigenically distinct VSGs from an estimated 1000 VSG genes. This is Variant surface glycoprotein 7 from Trypanosoma brucei rhodesiense.